We begin with the raw amino-acid sequence, 506 residues long: Acrylate reductase flavoprotein subunit (506 aa).

The segment at residues 1-30 is a signal peptide (tat-type signal); it reads MSNKDLLGRRNFIKGMGAAAGVAMAAPALA. FAD is bound by residues Ala-54, Glu-74, Asn-82, Gly-87, and Gly-88. Arg-333 functions as the Proton donor in the catalytic mechanism. The FAD site is built by Glu-473 and Ile-489.

Belongs to the FAD-dependent oxidoreductase 2 family. FRD/SDH subfamily. In terms of assembly, the ArdAB flavocytochrome c is composed of a FAD-containing subunit (ArdA) and a heme c-containing subunit (ArdB). It depends on FAD as a cofactor. Post-translationally, predicted to be exported by the Tat system. The position of the signal peptide cleavage has not been experimentally proven.

Its subcellular location is the periplasm. Methacrylate acts as a competitive inhibitor of the acrylate reductase activity and suppresses the reductase activity in dose-dependent manner. FAD-containing subunit of the ArdAB flavocytochrome c, which catalyzes the reduction of acrylate to propanoate and supports dimethylsulfoniopropionate-dependent anaerobic respiration. In vitro, can use the artificial electron donor methyl viologen. The natural electron donor is probably a low-potential cytochrome c. Also shows weak activity toward methacrylate in vitro (at a 22-fold lower rate) but cannot use other tested 2-enoates, including crotonic, fumaric, sorbic, urocanic, cinnamic, p-coumaric, caffeic or ferulic acids. The protein catalyzes a unidirectional reaction and cannot oxidize propanoate with phenazine metasulfate and dichlorophenolindophenol as electron acceptors. This is Acrylate reductase flavoprotein subunit from Shewanella woodyi (strain ATCC 51908 / MS32).